Here is a 286-residue protein sequence, read N- to C-terminus: Transcriptional regulator of yeast form adherence 4 (286 aa).

Low complexity-rich tracts occupy residues M1–S29 and L37–N65. Residues M1 to P71 are disordered. C2H2-type zinc fingers lie at residues F78 to H101 and F107 to H130. The tract at residues H146–H260 is disordered. Composition is skewed to low complexity over residues G156–N165 and S228–T244. Polar residues predominate over residues N245 to H260.

The protein localises to the nucleus. In terms of biological role, transcription factor required for yeast cell adherence to silicone substrate. This chain is Transcriptional regulator of yeast form adherence 4 (TRY4), found in Candida albicans (strain SC5314 / ATCC MYA-2876) (Yeast).